Reading from the N-terminus, the 308-residue chain is GTP cyclohydrolase FolE2 (308 aa).

The protein belongs to the GTP cyclohydrolase IV family.

It carries out the reaction GTP + H2O = 7,8-dihydroneopterin 3'-triphosphate + formate + H(+). Its pathway is cofactor biosynthesis; 7,8-dihydroneopterin triphosphate biosynthesis; 7,8-dihydroneopterin triphosphate from GTP: step 1/1. Its function is as follows. Converts GTP to 7,8-dihydroneopterin triphosphate. This is GTP cyclohydrolase FolE2 from Colwellia psychrerythraea (strain 34H / ATCC BAA-681) (Vibrio psychroerythus).